The following is a 927-amino-acid chain: Isoleucine--tRNA ligase (927 aa).

A 'HIGH' region motif is present at residues proline 60 to histidine 70. Glutamate 557 provides a ligand contact to L-isoleucyl-5'-AMP. A 'KMSKS' region motif is present at residues lysine 598 to serine 602. Lysine 601 lines the ATP pocket. Residues cysteine 895, cysteine 898, cysteine 915, and cysteine 918 each coordinate Zn(2+).

It belongs to the class-I aminoacyl-tRNA synthetase family. IleS type 1 subfamily. In terms of assembly, monomer. Zn(2+) is required as a cofactor.

The protein localises to the cytoplasm. It carries out the reaction tRNA(Ile) + L-isoleucine + ATP = L-isoleucyl-tRNA(Ile) + AMP + diphosphate. Catalyzes the attachment of isoleucine to tRNA(Ile). As IleRS can inadvertently accommodate and process structurally similar amino acids such as valine, to avoid such errors it has two additional distinct tRNA(Ile)-dependent editing activities. One activity is designated as 'pretransfer' editing and involves the hydrolysis of activated Val-AMP. The other activity is designated 'posttransfer' editing and involves deacylation of mischarged Val-tRNA(Ile). The protein is Isoleucine--tRNA ligase of Syntrophomonas wolfei subsp. wolfei (strain DSM 2245B / Goettingen).